The chain runs to 122 residues: Phospholipase A2 nigroviriditoxin basic subunit B (122 aa).

Intrachain disulfides connect Cys-26-Cys-115, Cys-28-Cys-44, Cys-43-Cys-95, Cys-49-Cys-122, Cys-50-Cys-88, Cys-57-Cys-81, and Cys-75-Cys-86. Ca(2+) contacts are provided by Tyr-27, Gly-29, and Gly-31. Residue His-47 is part of the active site. A Ca(2+)-binding site is contributed by Asp-48. Asp-89 is a catalytic residue.

This sequence belongs to the phospholipase A2 family. Group II subfamily. D49 sub-subfamily. As to quaternary structure, nigroviriditoxin is a heterodimer of an acidic subunit A and a basic subunit B. Requires Ca(2+) as cofactor. In terms of tissue distribution, expressed by the venom gland.

The protein resides in the secreted. It carries out the reaction a 1,2-diacyl-sn-glycero-3-phosphocholine + H2O = a 1-acyl-sn-glycero-3-phosphocholine + a fatty acid + H(+). Functionally, heterodimer A-B: Nigroviriditoxin possesses phospholipase A2 (PLA2) activity. It consists of a non-covalent association of a basic PLA2 subunit B with a non-enzymatic subunit A. Subunit B: Snake venom phospholipase A2 (PLA2) that induces myonecrosis in mice. PLA2 catalyzes the calcium-dependent hydrolysis of the 2-acyl groups in 3-sn-phosphoglycerides. In Bothriechis nigroviridis (Black-speckled palm pit viper), this protein is Phospholipase A2 nigroviriditoxin basic subunit B.